The following is a 103-amino-acid chain: Small ribosomal subunit protein uS10 (103 aa).

The protein belongs to the universal ribosomal protein uS10 family. As to quaternary structure, part of the 30S ribosomal subunit.

In terms of biological role, involved in the binding of tRNA to the ribosomes. The protein is Small ribosomal subunit protein uS10 of Paraburkholderia xenovorans (strain LB400).